We begin with the raw amino-acid sequence, 109 residues long: uncharacterized protein (109 aa).

The next 3 helical transmembrane spans lie at 16–36, 52–72, and 87–107; these read HPHLGISFIGCLLAITLEIYF, LIVLLVINMVTIPVVMALIAL, and ILLCLLSCILTIAGLFIAYPV.

Its subcellular location is the cell membrane. This is an uncharacterized protein from Salmonella typhimurium (strain LT2 / SGSC1412 / ATCC 700720).